We begin with the raw amino-acid sequence, 263 residues long: Thymidylate synthase (263 aa).

DUMP is bound by residues Arg-25 and 123-124 (RR). The active-site Nucleophile is the Cys-143. DUMP is bound by residues 163 to 166 (RSGD), Asn-174, and 204 to 206 (HIY). Position 166 (Asp-166) interacts with (6R)-5,10-methylene-5,6,7,8-tetrahydrofolate. Ser-262 is a binding site for (6R)-5,10-methylene-5,6,7,8-tetrahydrofolate.

The protein belongs to the thymidylate synthase family. Bacterial-type ThyA subfamily. Homodimer.

The protein resides in the cytoplasm. It carries out the reaction dUMP + (6R)-5,10-methylene-5,6,7,8-tetrahydrofolate = 7,8-dihydrofolate + dTMP. It functions in the pathway pyrimidine metabolism; dTTP biosynthesis. In terms of biological role, catalyzes the reductive methylation of 2'-deoxyuridine-5'-monophosphate (dUMP) to 2'-deoxythymidine-5'-monophosphate (dTMP) while utilizing 5,10-methylenetetrahydrofolate (mTHF) as the methyl donor and reductant in the reaction, yielding dihydrofolate (DHF) as a by-product. This enzymatic reaction provides an intracellular de novo source of dTMP, an essential precursor for DNA biosynthesis. The sequence is that of Thymidylate synthase from Clostridium beijerinckii (strain ATCC 51743 / NCIMB 8052) (Clostridium acetobutylicum).